The primary structure comprises 153 residues: MPLLLTGRAFRRDLERERALAVYAPLEGGAETRLLRRLRAAGYRTELTSARGLGDPEAFLLGLHGVRPPHLGHHCVGRDAAVGEVQLVMPQLGPALASGAPVVLWMLEGQVLSSAEQASLLALCEREPRLHMVLELGGSRSLRWKPLRAALAA.

The protein belongs to the complex I NdhN subunit family. As to quaternary structure, NDH-1 can be composed of about 15 different subunits; different subcomplexes with different compositions have been identified which probably have different functions.

It localises to the cellular thylakoid membrane. It carries out the reaction a plastoquinone + NADH + (n+1) H(+)(in) = a plastoquinol + NAD(+) + n H(+)(out). The enzyme catalyses a plastoquinone + NADPH + (n+1) H(+)(in) = a plastoquinol + NADP(+) + n H(+)(out). In terms of biological role, NDH-1 shuttles electrons from an unknown electron donor, via FMN and iron-sulfur (Fe-S) centers, to quinones in the respiratory and/or the photosynthetic chain. The immediate electron acceptor for the enzyme in this species is believed to be plastoquinone. Couples the redox reaction to proton translocation, and thus conserves the redox energy in a proton gradient. Cyanobacterial NDH-1 also plays a role in inorganic carbon-concentration. This Synechococcus sp. (strain RCC307) protein is NAD(P)H-quinone oxidoreductase subunit N.